The sequence spans 103 residues: Pyrimidine/purine nucleoside phosphorylase (103 aa).

The protein belongs to the nucleoside phosphorylase PpnP family.

It catalyses the reaction a purine D-ribonucleoside + phosphate = a purine nucleobase + alpha-D-ribose 1-phosphate. The enzyme catalyses adenosine + phosphate = alpha-D-ribose 1-phosphate + adenine. It carries out the reaction cytidine + phosphate = cytosine + alpha-D-ribose 1-phosphate. The catalysed reaction is guanosine + phosphate = alpha-D-ribose 1-phosphate + guanine. It catalyses the reaction inosine + phosphate = alpha-D-ribose 1-phosphate + hypoxanthine. The enzyme catalyses thymidine + phosphate = 2-deoxy-alpha-D-ribose 1-phosphate + thymine. It carries out the reaction uridine + phosphate = alpha-D-ribose 1-phosphate + uracil. The catalysed reaction is xanthosine + phosphate = alpha-D-ribose 1-phosphate + xanthine. Its function is as follows. Catalyzes the phosphorolysis of diverse nucleosides, yielding D-ribose 1-phosphate and the respective free bases. Can use uridine, adenosine, guanosine, cytidine, thymidine, inosine and xanthosine as substrates. Also catalyzes the reverse reactions. This Laribacter hongkongensis (strain HLHK9) protein is Pyrimidine/purine nucleoside phosphorylase.